The primary structure comprises 114 residues: UPF0342 protein SE_1526 (114 aa).

The protein belongs to the UPF0342 family.

The sequence is that of UPF0342 protein SE_1526 from Staphylococcus epidermidis (strain ATCC 12228 / FDA PCI 1200).